Reading from the N-terminus, the 394-residue chain is Putative pectate lyase 17 (394 aa).

A signal peptide spans 1 to 22; sequence MTHFTVSCLLVALFLCQSLVHA. Aspartate 192, aspartate 216, and aspartate 220 together coordinate Ca(2+). Arginine 272 is an active-site residue.

The protein belongs to the polysaccharide lyase 1 family. The cofactor is Ca(2+).

The enzyme catalyses Eliminative cleavage of (1-&gt;4)-alpha-D-galacturonan to give oligosaccharides with 4-deoxy-alpha-D-galact-4-enuronosyl groups at their non-reducing ends.. The protein operates within glycan metabolism; pectin degradation; 2-dehydro-3-deoxy-D-gluconate from pectin: step 2/5. This Arabidopsis thaliana (Mouse-ear cress) protein is Putative pectate lyase 17.